The following is a 155-amino-acid chain: Protein FAM162A (155 aa).

The required for proapoptotic activity stretch occupies residues arginine 77–lysine 103. A helical membrane pass occupies residues valine 102 to isoleucine 121.

It belongs to the UPF0389 family. Interacts with HSP90AB1; HSP90AB1 is essential for FAM162A mitochondrial localization and pro-apoptotic activity. Interacts with VDAC2; the interaction is probably involved in inducing mitochondrial permeability transition.

The protein localises to the mitochondrion membrane. Functionally, proposed to be involved in regulation of apoptosis; the exact mechanism may differ between cell types/tissues. May be involved in hypoxia-induced cell death of transformed cells implicating cytochrome C release and caspase activation (such as CASP9) and inducing mitochondrial permeability transition. May be involved in hypoxia-induced cell death of neuronal cells probably by promoting release of AIFM1 from mitochondria to cytoplasm and its translocation to the nucleus; however, the involvement of caspases has been reported conflictingly. This chain is Protein FAM162A (Fam162a), found in Rattus norvegicus (Rat).